A 163-amino-acid chain; its full sequence is ATP synthase subunit b (163 aa).

A helical membrane pass occupies residues 10-29 (ALYQLLAFSVLLFFLSKFAL).

It belongs to the ATPase B chain family. F-type ATPases have 2 components, F(1) - the catalytic core - and F(0) - the membrane proton channel. F(1) has five subunits: alpha(3), beta(3), gamma(1), delta(1), epsilon(1). F(0) has three main subunits: a(1), b(2) and c(10-14). The alpha and beta chains form an alternating ring which encloses part of the gamma chain. F(1) is attached to F(0) by a central stalk formed by the gamma and epsilon chains, while a peripheral stalk is formed by the delta and b chains.

Its subcellular location is the cell membrane. Functionally, f(1)F(0) ATP synthase produces ATP from ADP in the presence of a proton or sodium gradient. F-type ATPases consist of two structural domains, F(1) containing the extramembraneous catalytic core and F(0) containing the membrane proton channel, linked together by a central stalk and a peripheral stalk. During catalysis, ATP synthesis in the catalytic domain of F(1) is coupled via a rotary mechanism of the central stalk subunits to proton translocation. In terms of biological role, component of the F(0) channel, it forms part of the peripheral stalk, linking F(1) to F(0). In Alkalihalophilus pseudofirmus (strain ATCC BAA-2126 / JCM 17055 / OF4) (Bacillus pseudofirmus), this protein is ATP synthase subunit b.